A 176-amino-acid polypeptide reads, in one-letter code: Membrane glycoprotein UL144 (176 aa).

Positions 1–20 (MKPLIMLICFAVILLQLGVT) are cleaved as a signal peptide. TNFR-Cys repeat units lie at residues 22–56 (VCQH…SVTC) and 58–95 (PCPN…NTVC). Cystine bridges form between Cys-23-Cys-34, Cys-35-Cys-48, Cys-38-Cys-56, Cys-59-Cys-71, Cys-74-Cys-87, and Cys-77-Cys-95. The chain crosses the membrane as a helical span at residues 134 to 154 (LAWLSLFIFLVGIILLILYLI).

Interacts with host TRIM23; this interaction causes auto-ubiquitination of TRAF6, leading to NF-kappaB activation.

Its subcellular location is the membrane. In terms of biological role, activates NF-kappaB in a tumor necrosis factor receptor (TNFR)-associated factor 6 (TRAF6)-dependent manner, causing the up-regulation of the chemokine CCL22. The polypeptide is Membrane glycoprotein UL144 (UL144) (Homo sapiens (Human)).